Here is a 336-residue protein sequence, read N- to C-terminus: CASP-like protein UU1 (336 aa).

Over 1 to 170 (MGKGPGLDPS…PAMESNKDDN (170 aa)) the chain is Cytoplasmic. The helical transmembrane segment at 171–191 (FFGAIVLSLRAAQIVFTVVGL) threads the bilayer. The Extracellular portion of the chain corresponds to 192 to 222 (GVMGSLKHTSHGDYYYYYYDFSFTQVDSYIG). The helical transmembrane segment at 223 to 243 (VLSLDVIVCLYAIVQLVLCFI) threads the bilayer. The Cytoplasmic portion of the chain corresponds to 244–261 (QRSNQGKYLSSPTTVAAK). Residues 262-282 (LTFVFDQVLAYALVATAGAAA) form a helical membrane-spanning segment. Residues 283–307 (GSALEIRKGTSCSGTWTVICSKGEA) are Extracellular-facing. A helical membrane pass occupies residues 308-328 (SVAMSFFAFAFLAATAAVYSV). Topologically, residues 329–336 (RLLRITGR) are cytoplasmic.

The protein belongs to the Casparian strip membrane proteins (CASP) family. Homodimer and heterodimers.

It is found in the cell membrane. This is CASP-like protein UU1 from Physcomitrium patens (Spreading-leaved earth moss).